A 458-amino-acid chain; its full sequence is Bifunctional protein GlmU (458 aa).

The interval 1–229 is pyrophosphorylase; that stretch reads MKEKALSIVI…FMEVEGVNNR (229 aa). UDP-N-acetyl-alpha-D-glucosamine-binding positions include 11-14, Lys25, Gln76, 81-82, 103-105, Gly140, Glu154, Asn169, and Asn227; these read LAAG, GT, and YGD. Position 105 (Asp105) interacts with Mg(2+). Asn227 contributes to the Mg(2+) binding site. A linker region spans residues 230–250; sequence QQLARLERYYQRKQADNLLLA. The segment at 251–458 is N-acetyltransferase; sequence GVALADPERF…WQRPTKQTKK (208 aa). 2 residues coordinate UDP-N-acetyl-alpha-D-glucosamine: Arg333 and Lys351. The active-site Proton acceptor is the His363. The UDP-N-acetyl-alpha-D-glucosamine site is built by Tyr366 and Asn377. Acetyl-CoA-binding positions include Ala380, 386 to 387, Ser405, Ala423, and Arg440; that span reads NY.

The protein in the N-terminal section; belongs to the N-acetylglucosamine-1-phosphate uridyltransferase family. In the C-terminal section; belongs to the transferase hexapeptide repeat family. As to quaternary structure, homotrimer. The cofactor is Mg(2+).

The protein resides in the cytoplasm. The enzyme catalyses alpha-D-glucosamine 1-phosphate + acetyl-CoA = N-acetyl-alpha-D-glucosamine 1-phosphate + CoA + H(+). It catalyses the reaction N-acetyl-alpha-D-glucosamine 1-phosphate + UTP + H(+) = UDP-N-acetyl-alpha-D-glucosamine + diphosphate. It participates in nucleotide-sugar biosynthesis; UDP-N-acetyl-alpha-D-glucosamine biosynthesis; N-acetyl-alpha-D-glucosamine 1-phosphate from alpha-D-glucosamine 6-phosphate (route II): step 2/2. The protein operates within nucleotide-sugar biosynthesis; UDP-N-acetyl-alpha-D-glucosamine biosynthesis; UDP-N-acetyl-alpha-D-glucosamine from N-acetyl-alpha-D-glucosamine 1-phosphate: step 1/1. Its pathway is bacterial outer membrane biogenesis; LPS lipid A biosynthesis. In terms of biological role, catalyzes the last two sequential reactions in the de novo biosynthetic pathway for UDP-N-acetylglucosamine (UDP-GlcNAc). The C-terminal domain catalyzes the transfer of acetyl group from acetyl coenzyme A to glucosamine-1-phosphate (GlcN-1-P) to produce N-acetylglucosamine-1-phosphate (GlcNAc-1-P), which is converted into UDP-GlcNAc by the transfer of uridine 5-monophosphate (from uridine 5-triphosphate), a reaction catalyzed by the N-terminal domain. The polypeptide is Bifunctional protein GlmU (Pasteurella multocida (strain Pm70)).